A 213-amino-acid chain; its full sequence is uncharacterized protein (213 aa).

Positions 1–19 are cleaved as a signal peptide; it reads MKKVLLLLFVLTIGLALSA. Residue C20 is the site of N-palmitoyl cysteine attachment. The S-diacylglycerol cysteine moiety is linked to residue C20. The disordered stretch occupies residues 20–62; that stretch reads CSQSSDASEKEKPKEKKSQEELEKELDKELKKGGEPKTKKDDQ. Basic and acidic residues predominate over residues 26–62; sequence ASEKEKPKEKKSQEELEKELDKELKKGGEPKTKKDDQ.

The protein resides in the cell membrane. This is an uncharacterized protein from Bacillus subtilis (strain 168).